Here is a 663-residue protein sequence, read N- to C-terminus: Bifunctional polymyxin resistance protein ArnA (663 aa).

The segment at 1 to 307 is formyltransferase ArnAFT; that stretch reads MSPKAVVFAY…EFGLVEGSQL (307 aa). The Proton donor; for formyltransferase activity role is filled by histidine 106. (6R)-10-formyltetrahydrofolate-binding positions include arginine 116 and 138–142; that span reads VKRAD. Residues 317–663 form a dehydrogenase ArnADH region; that stretch reads RRTRVLILGV…EAMAEKADMR (347 aa). NAD(+) contacts are provided by residues aspartate 350 and 371–372; that span reads DI. UDP-alpha-D-glucuronate contacts are provided by residues alanine 396, tyrosine 401, and 435-436; that span reads TS. The Proton acceptor; for decarboxylase activity role is filled by glutamate 437. UDP-alpha-D-glucuronate is bound by residues arginine 463, asparagine 494, 528-537, and tyrosine 615; that span reads RLVDGGAQKR. Arginine 621 (proton donor; for decarboxylase activity) is an active-site residue.

The protein in the N-terminal section; belongs to the Fmt family. UDP-L-Ara4N formyltransferase subfamily. This sequence in the C-terminal section; belongs to the NAD(P)-dependent epimerase/dehydratase family. UDP-glucuronic acid decarboxylase subfamily. Homohexamer, formed by a dimer of trimers.

It catalyses the reaction UDP-alpha-D-glucuronate + NAD(+) = UDP-beta-L-threo-pentopyranos-4-ulose + CO2 + NADH. The enzyme catalyses UDP-4-amino-4-deoxy-beta-L-arabinose + (6R)-10-formyltetrahydrofolate = UDP-4-deoxy-4-formamido-beta-L-arabinose + (6S)-5,6,7,8-tetrahydrofolate + H(+). The protein operates within nucleotide-sugar biosynthesis; UDP-4-deoxy-4-formamido-beta-L-arabinose biosynthesis; UDP-4-deoxy-4-formamido-beta-L-arabinose from UDP-alpha-D-glucuronate: step 1/3. It functions in the pathway nucleotide-sugar biosynthesis; UDP-4-deoxy-4-formamido-beta-L-arabinose biosynthesis; UDP-4-deoxy-4-formamido-beta-L-arabinose from UDP-alpha-D-glucuronate: step 3/3. It participates in bacterial outer membrane biogenesis; lipopolysaccharide biosynthesis. In terms of biological role, bifunctional enzyme that catalyzes the oxidative decarboxylation of UDP-glucuronic acid (UDP-GlcUA) to UDP-4-keto-arabinose (UDP-Ara4O) and the addition of a formyl group to UDP-4-amino-4-deoxy-L-arabinose (UDP-L-Ara4N) to form UDP-L-4-formamido-arabinose (UDP-L-Ara4FN). The modified arabinose is attached to lipid A and is required for resistance to polymyxin and cationic antimicrobial peptides. This chain is Bifunctional polymyxin resistance protein ArnA, found in Pseudomonas savastanoi pv. phaseolicola (strain 1448A / Race 6) (Pseudomonas syringae pv. phaseolicola (strain 1448A / Race 6)).